The following is a 327-amino-acid chain: Zinc transport protein ZntB (327 aa).

The Cytoplasmic portion of the chain corresponds to 1-273; the sequence is MEAIKGSDVN…ARRTYTMSLM (273 aa). A helical transmembrane segment spans residues 274-294; the sequence is AMVFLPSTFLTGLFGVNLGGI. The Periplasmic segment spans residues 295-300; the sequence is PGGGWQ. A helical membrane pass occupies residues 301-321; sequence FGFSIFCILLVVLIGGVALWL. Residues 322–327 are Cytoplasmic-facing; it reads HRSKWL.

Belongs to the CorA metal ion transporter (MIT) (TC 1.A.35) family.

It localises to the cell inner membrane. It carries out the reaction Zn(2+)(out) + H(+)(out) = Zn(2+)(in) + H(+)(in). Zinc transporter. Acts as a Zn(2+):proton symporter, which likely mediates zinc ion uptake. The chain is Zinc transport protein ZntB from Escherichia coli O6:K15:H31 (strain 536 / UPEC).